A 452-amino-acid polypeptide reads, in one-letter code: Bifunctional protein GlmU (452 aa).

A pyrophosphorylase region spans residues 1 to 224 (MNIVILAAGQ…EWEVLGVNSK (224 aa)). Residues 6–9 (LAAG), Lys-20, Gln-71, 76–77 (GT), 98–100 (YGD), Gly-134, Glu-149, Asn-164, and Asn-222 contribute to the UDP-N-acetyl-alpha-D-glucosamine site. Mg(2+) is bound at residue Asp-100. Asn-222 is a binding site for Mg(2+). Positions 225–245 (VQLAELERQHQLNLAGELLVA) are linker. Positions 246–452 (GVRLADPARI…GWERPKKVKK (207 aa)) are N-acetyltransferase. Arg-328 and Lys-346 together coordinate UDP-N-acetyl-alpha-D-glucosamine. His-358 serves as the catalytic Proton acceptor. Residues Tyr-361 and Asn-372 each contribute to the UDP-N-acetyl-alpha-D-glucosamine site. Residues Ala-375, 381–382 (NY), Ser-400, Ala-418, and Arg-435 contribute to the acetyl-CoA site.

In the N-terminal section; belongs to the N-acetylglucosamine-1-phosphate uridyltransferase family. It in the C-terminal section; belongs to the transferase hexapeptide repeat family. In terms of assembly, homotrimer. It depends on Mg(2+) as a cofactor.

The protein resides in the cytoplasm. The catalysed reaction is alpha-D-glucosamine 1-phosphate + acetyl-CoA = N-acetyl-alpha-D-glucosamine 1-phosphate + CoA + H(+). The enzyme catalyses N-acetyl-alpha-D-glucosamine 1-phosphate + UTP + H(+) = UDP-N-acetyl-alpha-D-glucosamine + diphosphate. It participates in nucleotide-sugar biosynthesis; UDP-N-acetyl-alpha-D-glucosamine biosynthesis; N-acetyl-alpha-D-glucosamine 1-phosphate from alpha-D-glucosamine 6-phosphate (route II): step 2/2. It functions in the pathway nucleotide-sugar biosynthesis; UDP-N-acetyl-alpha-D-glucosamine biosynthesis; UDP-N-acetyl-alpha-D-glucosamine from N-acetyl-alpha-D-glucosamine 1-phosphate: step 1/1. Its pathway is bacterial outer membrane biogenesis; LPS lipid A biosynthesis. Catalyzes the last two sequential reactions in the de novo biosynthetic pathway for UDP-N-acetylglucosamine (UDP-GlcNAc). The C-terminal domain catalyzes the transfer of acetyl group from acetyl coenzyme A to glucosamine-1-phosphate (GlcN-1-P) to produce N-acetylglucosamine-1-phosphate (GlcNAc-1-P), which is converted into UDP-GlcNAc by the transfer of uridine 5-monophosphate (from uridine 5-triphosphate), a reaction catalyzed by the N-terminal domain. The protein is Bifunctional protein GlmU of Dechloromonas aromatica (strain RCB).